A 166-amino-acid polypeptide reads, in one-letter code: MMSSMALSSTSLCSSFISQHPKLSITASPPLFHTQTTKPISVKRKIITLAAPETLTAETVTGIDTSDNTPQQTIKVVKPDEKSRVVLKFVWMEKNIGLGLDQHVPGHGTIPLSPYFFWPRKDAWEELKSTLEAKPWISQKKMIILLNQATDIINLWQQSGGNLTSQ.

It belongs to the chloroplast-specific ribosomal protein cS23 family. As to quaternary structure, part of the 30S ribosomal subunit.

The protein localises to the plastid. The protein resides in the chloroplast. Functionally, component of the chloroplast ribosome (chloro-ribosome), a dedicated translation machinery responsible for the synthesis of chloroplast genome-encoded proteins, including proteins of the transcription and translation machinery and components of the photosynthetic apparatus. The chain is Small ribosomal subunit protein cS23z from Arabidopsis thaliana (Mouse-ear cress).